A 226-amino-acid chain; its full sequence is MLTCLQRDSLSFPPLERALHQPNGLLAVGGDLSAERLIQAYRHGCFPWYQAGQPILWWSPDPRTVLFPRELHVSRSLRKVLRQERFQVSFDRDFAAVIQACAGPRDYADGTWITPEMRKAYQELHHRGIAHSVEVWQNGVLVGGLYGLAIGQLFFGESMFSHADNASKVGFATLVERLERWGFVLIDCQMPTQHLQSLGARSIPRTEFSDYLMHHLDLPSTADWIA.

Belongs to the L/F-transferase family.

Its subcellular location is the cytoplasm. The enzyme catalyses N-terminal L-lysyl-[protein] + L-leucyl-tRNA(Leu) = N-terminal L-leucyl-L-lysyl-[protein] + tRNA(Leu) + H(+). It catalyses the reaction N-terminal L-arginyl-[protein] + L-leucyl-tRNA(Leu) = N-terminal L-leucyl-L-arginyl-[protein] + tRNA(Leu) + H(+). The catalysed reaction is L-phenylalanyl-tRNA(Phe) + an N-terminal L-alpha-aminoacyl-[protein] = an N-terminal L-phenylalanyl-L-alpha-aminoacyl-[protein] + tRNA(Phe). Functionally, functions in the N-end rule pathway of protein degradation where it conjugates Leu, Phe and, less efficiently, Met from aminoacyl-tRNAs to the N-termini of proteins containing an N-terminal arginine or lysine. This Azotobacter vinelandii (strain DJ / ATCC BAA-1303) protein is Leucyl/phenylalanyl-tRNA--protein transferase.